A 363-amino-acid polypeptide reads, in one-letter code: Holliday junction branch migration complex subunit RuvB (363 aa).

A disordered region spans residues 1–32; the sequence is MAIQTDSFAAAPAPSSGSTRRLISAAPTSPNE. The segment covering 7–18 has biased composition (low complexity); sequence SFAAAPAPSSGS. Residues 13–200 are large ATPase domain (RuvB-L); that stretch reads APSSGSTRRL…FGIVARLEFY (188 aa). Residues L39, R40, G81, K84, T85, T86, 147–149, R190, Y200, and R237 contribute to the ATP site; that span reads EDY. T85 contacts Mg(2+). Positions 201-271 are small ATPAse domain (RuvB-S); sequence TPEELVRIVT…IAELALTMLD (71 aa). The tract at residues 274 to 363 is head domain (RuvB-H); it reads PRGFDVMDRK…GPVGSDLFEG (90 aa). DNA contacts are provided by R329 and R334.

This sequence belongs to the RuvB family. Homohexamer. Forms an RuvA(8)-RuvB(12)-Holliday junction (HJ) complex. HJ DNA is sandwiched between 2 RuvA tetramers; dsDNA enters through RuvA and exits via RuvB. An RuvB hexamer assembles on each DNA strand where it exits the tetramer. Each RuvB hexamer is contacted by two RuvA subunits (via domain III) on 2 adjacent RuvB subunits; this complex drives branch migration. In the full resolvosome a probable DNA-RuvA(4)-RuvB(12)-RuvC(2) complex forms which resolves the HJ.

The protein localises to the cytoplasm. The catalysed reaction is ATP + H2O = ADP + phosphate + H(+). Functionally, the RuvA-RuvB-RuvC complex processes Holliday junction (HJ) DNA during genetic recombination and DNA repair, while the RuvA-RuvB complex plays an important role in the rescue of blocked DNA replication forks via replication fork reversal (RFR). RuvA specifically binds to HJ cruciform DNA, conferring on it an open structure. The RuvB hexamer acts as an ATP-dependent pump, pulling dsDNA into and through the RuvAB complex. RuvB forms 2 homohexamers on either side of HJ DNA bound by 1 or 2 RuvA tetramers; 4 subunits per hexamer contact DNA at a time. Coordinated motions by a converter formed by DNA-disengaged RuvB subunits stimulates ATP hydrolysis and nucleotide exchange. Immobilization of the converter enables RuvB to convert the ATP-contained energy into a lever motion, pulling 2 nucleotides of DNA out of the RuvA tetramer per ATP hydrolyzed, thus driving DNA branch migration. The RuvB motors rotate together with the DNA substrate, which together with the progressing nucleotide cycle form the mechanistic basis for DNA recombination by continuous HJ branch migration. Branch migration allows RuvC to scan DNA until it finds its consensus sequence, where it cleaves and resolves cruciform DNA. This chain is Holliday junction branch migration complex subunit RuvB, found in Leptothrix cholodnii (strain ATCC 51168 / LMG 8142 / SP-6) (Leptothrix discophora (strain SP-6)).